The following is a 458-amino-acid chain: tRNA modification GTPase MnmE (458 aa).

(6S)-5-formyl-5,6,7,8-tetrahydrofolate-binding residues include arginine 26, glutamate 88, and arginine 127. Residues 224–378 enclose the TrmE-type G domain; it reads GLSTAIIGRP…IEDRINQLFF (155 aa). K(+) is bound at residue asparagine 234. Residues 234 to 239, 253 to 259, and 278 to 281 contribute to the GTP site; these read NVGKSS, TDIAGTT, and DTAG. Residue serine 238 participates in Mg(2+) binding. Residues threonine 253, isoleucine 255, and threonine 258 each contribute to the K(+) site. Threonine 259 provides a ligand contact to Mg(2+). Lysine 458 provides a ligand contact to (6S)-5-formyl-5,6,7,8-tetrahydrofolate.

Belongs to the TRAFAC class TrmE-Era-EngA-EngB-Septin-like GTPase superfamily. TrmE GTPase family. As to quaternary structure, homodimer. Heterotetramer of two MnmE and two MnmG subunits. K(+) is required as a cofactor.

Its subcellular location is the cytoplasm. In terms of biological role, exhibits a very high intrinsic GTPase hydrolysis rate. Involved in the addition of a carboxymethylaminomethyl (cmnm) group at the wobble position (U34) of certain tRNAs, forming tRNA-cmnm(5)s(2)U34. This is tRNA modification GTPase MnmE from Streptococcus pyogenes serotype M6 (strain ATCC BAA-946 / MGAS10394).